A 153-amino-acid polypeptide reads, in one-letter code: Ubiquitin-conjugating enzyme E2 36 (153 aa).

Residues asparagine 5–serine 151 form the UBC core domain. Catalysis depends on cysteine 89, which acts as the Glycyl thioester intermediate.

The protein belongs to the ubiquitin-conjugating enzyme family. In terms of assembly, interacts with yeast and human Mms2, with the RING domain of RGLG2 and with UEV1A, UEV1B, UEV1C and UEV1D. In terms of tissue distribution, ubiquitously expressed at low level.

The catalysed reaction is S-ubiquitinyl-[E1 ubiquitin-activating enzyme]-L-cysteine + [E2 ubiquitin-conjugating enzyme]-L-cysteine = [E1 ubiquitin-activating enzyme]-L-cysteine + S-ubiquitinyl-[E2 ubiquitin-conjugating enzyme]-L-cysteine.. Its pathway is protein modification; protein ubiquitination. Its function is as follows. Catalyzes the synthesis of non-canonical poly-ubiquitin chains that are linked through 'Lys-63'. This type of poly-ubiquitination does not lead to protein degradation by the proteasome. Mediates transcriptional activation of target genes. Required for postreplication repair of UV-damaged DNA and for adapting root developmental programs to suboptimal availability of iron. The chain is Ubiquitin-conjugating enzyme E2 36 (UBC36) from Arabidopsis thaliana (Mouse-ear cress).